Consider the following 163-residue polypeptide: Nucleotide-binding protein Mvan_0997 (163 aa).

It belongs to the YajQ family.

In terms of biological role, nucleotide-binding protein. This chain is Nucleotide-binding protein Mvan_0997, found in Mycolicibacterium vanbaalenii (strain DSM 7251 / JCM 13017 / BCRC 16820 / KCTC 9966 / NRRL B-24157 / PYR-1) (Mycobacterium vanbaalenii).